Consider the following 132-residue polypeptide: Small ribosomal subunit protein uS8 (132 aa).

Belongs to the universal ribosomal protein uS8 family. In terms of assembly, part of the 30S ribosomal subunit. Contacts proteins S5 and S12.

In terms of biological role, one of the primary rRNA binding proteins, it binds directly to 16S rRNA central domain where it helps coordinate assembly of the platform of the 30S subunit. This Ligilactobacillus salivarius (strain UCC118) (Lactobacillus salivarius) protein is Small ribosomal subunit protein uS8.